The sequence spans 236 residues: Small ribosomal subunit protein uS2c (236 aa).

It belongs to the universal ribosomal protein uS2 family.

The protein localises to the plastid. Its subcellular location is the chloroplast. This Oryza sativa (Rice) protein is Small ribosomal subunit protein uS2c (rps2).